The following is a 173-amino-acid chain: CASP-like protein 2D1 (173 aa).

Residues 1-9 (MAPLLKLLD) are Cytoplasmic-facing. A helical transmembrane segment spans residues 10–29 (SSLRVSVIPLSAATIWLTVT). Topologically, residues 30–50 (NHQDNSSYGNLKYSNIMGLKY) are extracellular. Residue asparagine 34 is glycosylated (N-linked (GlcNAc...) asparagine). The helical transmembrane segment at 51 to 71 (MVCISAICASYAFVAAVSIWI) threads the bilayer. Residues 72 to 86 (KCLVNKVWLFFVSDQ) lie on the Cytoplasmic side of the membrane. Residues 87 to 107 (IIAYLMVTSVAAAMEILYIAY) form a helical membrane-spanning segment. Over 108 to 131 (NGDQKVTWSEACTSYGKFCNGMKT) the chain is Extracellular. A helical transmembrane segment spans residues 132 to 152 (ALILHALTLCFFIVLAVISAY). The Cytoplasmic portion of the chain corresponds to 153–173 (RAFSMYQPPVSSKETVEGDAT).

It belongs to the Casparian strip membrane proteins (CASP) family. As to quaternary structure, homodimer and heterodimers.

It is found in the cell membrane. In Ricinus communis (Castor bean), this protein is CASP-like protein 2D1.